The sequence spans 342 residues: Transmembrane protein 268 (342 aa).

2 helical membrane-spanning segments follow: residues 106–126 and 133–153; these read AFAV…SQMF and AGVL…VLVF. The segment at 245 to 267 is disordered; that stretch reads VEGPEDLEDAPLLPSTPGPQERP.

Interacts with ITGAM; this interaction inhibits ITGAM degradation via the endosome-lysosome pathway. Interacts with ITGB4; this interaction prevents ITGB4 degradation.

Its subcellular location is the cell membrane. In terms of biological role, stabilizes cell surface expression of ITGAM and participates in the adhesion and migration of phagocytes during bacterial clearance. This chain is Transmembrane protein 268, found in Mus musculus (Mouse).